The following is a 519-amino-acid chain: Serine/threonine-protein kinase RIO3 (519 aa).

Serine 8 and serine 112 each carry phosphoserine. A Phosphotyrosine modification is found at tyrosine 122. Residues tyrosine 122–glycine 159 are disordered. Acidic residues predominate over residues aspartate 124–tryptophan 134. Phosphoserine is present on residues serine 125, serine 127, and serine 128. Residues glutamate 251 to glutamate 519 enclose the Protein kinase domain. Residues isoleucine 257–valine 265 and lysine 290 each bind ATP. The active-site Proton acceptor is aspartate 406.

Belongs to the protein kinase superfamily. RIO-type Ser/Thr kinase family. As to quaternary structure, interacts with CASP10. Interacts with IRF3; RIOK3 probably mediates the interaction of TBK1 with IRF3. Associated with 40S pre-ribosomal particles. Requires Mg(2+) as cofactor. Post-translationally, autophosphorylated (in vitro).

Its subcellular location is the cytoplasm. It catalyses the reaction L-seryl-[protein] + ATP = O-phospho-L-seryl-[protein] + ADP + H(+). It carries out the reaction L-threonyl-[protein] + ATP = O-phospho-L-threonyl-[protein] + ADP + H(+). Involved in regulation of type I interferon (IFN)-dependent immune response which plays a critical role in the innate immune response against DNA and RNA viruses. May act as an adapter protein essential for the recruitment of TBK1 to IRF3. Phosphorylates IFIH1 within the C-terminal region interfering with IFIH1 filament assembly on long dsRNA and resulting in attenuated IFIH1-signaling. Can inhibit CASP10 isoform 7-mediated activation of the NF-kappaB signaling pathway. May play a role in the biogenesis of the 40S ribosomal subunit. Involved in the processing of 21S pre-rRNA to the mature 18S rRNA. The sequence is that of Serine/threonine-protein kinase RIO3 (RIOK3) from Bos taurus (Bovine).